We begin with the raw amino-acid sequence, 72 residues long: DNA gyrase inhibitor YacG (72 aa).

Residues C17, C20, C32, and C36 each contribute to the Zn(2+) site. Positions 51–72 (IPGPEEEEMSYPPRSDDENRSR) are disordered.

This sequence belongs to the DNA gyrase inhibitor YacG family. Interacts with GyrB. The cofactor is Zn(2+).

Its function is as follows. Inhibits all the catalytic activities of DNA gyrase by preventing its interaction with DNA. Acts by binding directly to the C-terminal domain of GyrB, which probably disrupts DNA binding by the gyrase. In Methylorubrum extorquens (strain PA1) (Methylobacterium extorquens), this protein is DNA gyrase inhibitor YacG.